The primary structure comprises 566 residues: Autophagy-related protein 22-1 (566 aa).

Residues 38–58 traverse the membrane as a helical segment; sequence YPIAAEVFAVVAVGAFLPVIL. Asn-103 carries an N-linked (GlcNAc...) asparagine glycan. The next 3 helical transmembrane spans lie at 110–130, 146–168, and 179–199; these read SFAM…LVCF, AFAY…VYFL, and SLGC…ANHA. Asn-200 is a glycosylation site (N-linked (GlcNAc...) asparagine). The next 8 helical transmembrane spans lie at 242 to 262, 278 to 298, 351 to 371, 382 to 402, 416 to 436, 451 to 471, 488 to 510, and 519 to 539; these read GYGY…LWLF, VILL…LLWL, FLIS…TAVL, IAIA…AFAW, ILLC…LGFI, WEIY…SSYA, FALY…GWLV, and AFIF…MLDV. The segment at 547–566 is disordered; it reads KAMADGEGRGRGTYERVREE.

It belongs to the ATG22 family.

The protein localises to the vacuole membrane. Functionally, vacuolar effluxer which mediate the efflux of amino acids resulting from autophagic degradation. The release of autophagic amino acids allows the maintenance of protein synthesis and viability during nitrogen starvation. The polypeptide is Autophagy-related protein 22-1 (ATG22-1) (Phaeosphaeria nodorum (strain SN15 / ATCC MYA-4574 / FGSC 10173) (Glume blotch fungus)).